Consider the following 326-residue polypeptide: MARKNLLAGLVDTAEIPHADVAPAYPMRGASKSMVRSLDELSRQAEKFLEGETVVELDPETLDGSFVSDRMGDSSEQFEELKQAIAERGQDTPILVRPHPSAADRYQIVFGHRRARVARELGRKVKAVVKALDDRTHVIAQGQENSARANLSFIERANFASHLEKLGYDRTIIGSALAANAAAISKMIAVIDRIPEETIARIGPCPAVGRERWVELSLLVGKTANEAKVKAIVSDPSFNELSTDDRFNSLFSGLNSAAKPVRKTTPKILENWQPADKTVSAKYSNSAKAFALSMKSRNAGPFGRYIADNLDRLYAEFLEQGNRKED.

It belongs to the ParB family.

The polypeptide is Putative replication protein B (Sinorhizobium fredii (strain NBRC 101917 / NGR234)).